Reading from the N-terminus, the 80-residue chain is Translation initiation factor IF-1, chloroplastic (80 aa).

Positions 1–72 (MKEHDLINME…TKGRILYRIR (72 aa)) constitute an S1-like domain.

This sequence belongs to the IF-1 family. Component of the 30S ribosomal translation pre-initiation complex which assembles on the 30S ribosome in the order IF-2 and IF-3, IF-1 and N-formylmethionyl-tRNA(fMet); mRNA recruitment can occur at any time during PIC assembly.

It is found in the plastid. The protein localises to the chloroplast. In terms of biological role, one of the essential components for the initiation of protein synthesis. Stabilizes the binding of IF-2 and IF-3 on the 30S subunit to which N-formylmethionyl-tRNA(fMet) subsequently binds. Helps modulate mRNA selection, yielding the 30S pre-initiation complex (PIC). Upon addition of the 50S ribosomal subunit IF-1, IF-2 and IF-3 are released leaving the mature 70S translation initiation complex. The sequence is that of Translation initiation factor IF-1, chloroplastic from Psilotum nudum (Whisk fern).